Consider the following 457-residue polypeptide: Argininosuccinate lyase (457 aa).

Belongs to the lyase 1 family. Argininosuccinate lyase subfamily.

Its subcellular location is the cytoplasm. The catalysed reaction is 2-(N(omega)-L-arginino)succinate = fumarate + L-arginine. Its pathway is amino-acid biosynthesis; L-arginine biosynthesis; L-arginine from L-ornithine and carbamoyl phosphate: step 3/3. The protein is Argininosuccinate lyase of Citrobacter koseri (strain ATCC BAA-895 / CDC 4225-83 / SGSC4696).